The chain runs to 220 residues: Small ribosomal subunit protein uS3 (220 aa).

The region spanning Ile38–Lys106 is the KH type-2 domain.

This sequence belongs to the universal ribosomal protein uS3 family. As to quaternary structure, part of the 30S ribosomal subunit. Forms a tight complex with proteins S10 and S14.

In terms of biological role, binds the lower part of the 30S subunit head. Binds mRNA in the 70S ribosome, positioning it for translation. The sequence is that of Small ribosomal subunit protein uS3 from Lacticaseibacillus paracasei (strain ATCC 334 / BCRC 17002 / CCUG 31169 / CIP 107868 / KCTC 3260 / NRRL B-441) (Lactobacillus paracasei).